We begin with the raw amino-acid sequence, 780 residues long: Potassium/sodium hyperpolarization-activated cyclic nucleotide-gated channel 3 (780 aa).

A disordered region spans residues 1 to 47; that stretch reads MEEEARPAVGDGEAATPARETPPAAPAQARAASGGVPESAPEPKRRQ. Topologically, residues 1–96 are cytoplasmic; sequence MEEEARPAVG…PYSDFRFYWD (96 aa). Residues 13–32 are compositionally biased toward low complexity; the sequence is EAATPARETPPAAPAQARAA. Residues 45 to 90 form an involved in subunit assembly region; that stretch reads RRQLGTLLQPTVNKFSLRVFGSHKAVEIEQERVKSAGAWIIHPYSD. Residues 97–117 traverse the membrane as a helical segment; that stretch reads LIMLLLMVGNLIVLPVGITFF. Topologically, residues 118 to 123 are extracellular; the sequence is KEENSP. The helical transmembrane segment at 124–144 threads the bilayer; that stretch reads PWIVFNVLSDTFFLLDLVLNF. Residues 145-170 are Cytoplasmic-facing; the sequence is RTGIVVEEGAEILLAPRAIRTRYLRT. Residues 171 to 191 form a helical membrane-spanning segment; that stretch reads WFLVDLISSIPVDYIFLVVEL. Residues 192 to 200 lie on the Extracellular side of the membrane; the sequence is EPRLDAEVY. Residues 201-221 form a helical; Voltage-sensor membrane-spanning segment; sequence KTARALRIVRFTKILSLLRLL. The Cytoplasmic portion of the chain corresponds to 222 to 252; the sequence is RLSRLIRYMHQWEEIFHMTYDLASAVVRIFN. A helical transmembrane segment spans residues 253 to 273; it reads LIGMMLLLCHWDGCLQFLVPM. Residues 274 to 296 are Extracellular-facing; the sequence is LQDFPSDCWVSMNRMVNHSWGRQ. The N-linked (GlcNAc...) asparagine glycan is linked to N290. Positions 297 to 318 form an intramembrane region, pore-forming; sequence YSHALFKAMSHMLCIGYGQQAP. The Extracellular segment spans residues 319-328; sequence VGMPDVWLTM. A helical membrane pass occupies residues 329–349; that stretch reads LSMIVGATCYAMFIGHATALI. The Cytoplasmic portion of the chain corresponds to 350–780; it reads QSLDSSRRQY…PRGPQISANM (431 aa). Residues 353-780 form an interaction with KCTD3 region; it reads DSSRRQYQEK…PRGPQISANM (428 aa). G491, E492, C494, R501, T502, R542, and R545 together coordinate 3',5'-cyclic AMP. The segment at 549–569 is disordered; it reads KNSILQRKRSEPSPGSSSGGV. The residue at position 634 (S634) is a Phosphoserine. Polar residues predominate over residues 687-698; sequence ASLSRTGRSQVS. Residues 687–780 are disordered; sequence ASLSRTGRSQ…PRGPQISANM (94 aa).

This sequence belongs to the potassium channel HCN family. In terms of assembly, homotetramer. The potassium channel is composed of a homo- or heterotetrameric complex of pore-forming subunits. Interacts with HCN1. Interacts with KCTD3; this interaction increases cell surface expression and current density of this channel. Interacts with PEX5L.

Its subcellular location is the cell membrane. The catalysed reaction is K(+)(in) = K(+)(out). It catalyses the reaction Na(+)(in) = Na(+)(out). With respect to regulation, inhibited by Cs(1+) and ivabradine. Unlike HCN2 and HCN4, HCN3 is insensitive to cyclic nucleotides, such as cAMP or cGMP. This lack of sensitivity of HCN3, despite harboring a functional cyclic nucleotide-binding domain (CNBD), may be explained by its shorter C-terminal sequence, which may alter the normal autoinhibition of the channel. Phosphatidylinositol-4,5-bisphosphate (PIP(2)) shifts HCN3 activation to more depolarized potentials and accelerated activation kinetics. Functionally, hyperpolarization-activated ion channel that are permeable to sodium and potassium ions, with an about 3:1 preference for potassium ions. Contributes to the native pacemaker currents in heart (If) and in neurons (Ih). In particular, plays a pivotal role in maintaining excitability and promoting rhythmic burst firing within hypothalamic nuclei. Exerts a significant influence on the configuration of the cardiac action potential waveform. Does not appear to play a prominent role in the processing of acute, neuropathic, or inflammatory pain. In Rattus norvegicus (Rat), this protein is Potassium/sodium hyperpolarization-activated cyclic nucleotide-gated channel 3 (Hcn3).